The following is a 493-amino-acid chain: UDP-N-acetylmuramoyl-L-alanyl-D-glutamate--L-lysine ligase (493 aa).

UDP-N-acetyl-alpha-D-muramoyl-L-alanyl-D-glutamate is bound at residue Ser-30. 110-116 (GTNGKTS) provides a ligand contact to ATP. Residues Asn-151, 152 to 153 (TT), Ser-179, and Arg-187 each bind UDP-N-acetyl-alpha-D-muramoyl-L-alanyl-D-glutamate. Lys-219 is modified (N6-carboxylysine). An L-lysine recognition motif motif is present at residues 406 to 409 (DNPA).

Belongs to the MurCDEF family. MurE subfamily. Mg(2+) is required as a cofactor. Post-translationally, carboxylation is probably crucial for Mg(2+) binding and, consequently, for the gamma-phosphate positioning of ATP.

Its subcellular location is the cytoplasm. The enzyme catalyses UDP-N-acetyl-alpha-D-muramoyl-L-alanyl-D-glutamate + L-lysine + ATP = UDP-N-acetyl-alpha-D-muramoyl-L-alanyl-gamma-D-glutamyl-L-lysine + ADP + phosphate + H(+). Its pathway is cell wall biogenesis; peptidoglycan biosynthesis. Catalyzes the addition of L-lysine to the nucleotide precursor UDP-N-acetylmuramoyl-L-alanyl-D-glutamate (UMAG) in the biosynthesis of bacterial cell-wall peptidoglycan. Cannot use diaminopimelate as substrate. Can accept L-ornithine as substrate, but the efficiency is 400-fold lower than that with L-lysine. Seems to have a role in beta-lactam antibiotic resistance. This chain is UDP-N-acetylmuramoyl-L-alanyl-D-glutamate--L-lysine ligase, found in Staphylococcus aureus (strain NCTC 8325 / PS 47).